Reading from the N-terminus, the 726-residue chain is Dipeptidyl-peptidase 5 (726 aa).

A signal peptide spans 1–19 (MAPAKWLIASLAFASTGLA). 2 N-linked (GlcNAc...) asparagine glycosylation sites follow: Asn-96 and Asn-252. The disordered stretch occupies residues 268–292 (VAEPINKRNGPRTPHGIEGASSSPV). Residue Asn-485 is glycosylated (N-linked (GlcNAc...) asparagine). Ser-558 functions as the Charge relay system in the catalytic mechanism. A glycan (N-linked (GlcNAc...) asparagine) is linked at Asn-605. Active-site charge relay system residues include Asp-641 and His-673. Residue Asn-699 is glycosylated (N-linked (GlcNAc...) asparagine).

It belongs to the peptidase S9C family.

The protein localises to the secreted. In terms of biological role, extracellular dipeptidyl-peptidase which removes N-terminal dipeptides sequentially from polypeptides having unsubstituted N-termini. Contributes to pathogenicity. This Arthroderma otae (Microsporum canis) protein is Dipeptidyl-peptidase 5 (DPP5).